The following is a 1183-amino-acid chain: RecQ-like DNA helicase BLM (1183 aa).

The interval 1 to 109 (MEEARAATNG…AAEQDSSAEH (109 aa)) is disordered. A compositionally biased stretch (polar residues) spans 14-27 (ESQKLSNGEKSSQL). The span at 38–48 (ADIELEEDDYL) shows a compositional bias: acidic residues. The segment at 110–162 (ADKGLHLEQQLYSVMEDICKLVDAIPLHELTSISCAKELLQQRELRRKLLADS) is necessary for dimerization and homooligomerization. 3 disordered regions span residues 164–215 (ALNT…LPSV), 260–323 (PKVN…GCWD), and 381–408 (GSAP…PLVH). Polar residues-rich tracts occupy residues 206–215 (TPKSTNLPSV) and 265–280 (KGST…SFNG). Residues 439–443 (FRTNQ) and 463–467 (GGGKS) contribute to the ATP site. One can recognise a Helicase ATP-binding domain in the interval 447-622 (INAALLGEDC…QNQLEMLKPQ (176 aa)). Residues 566–569 (DEAH) carry the DEAH box motif. 3' overhang DNA-binding stretches follow at residues 641-644 (KPKK) and 668-670 (SRH). Positions 648–795 (DCLEWIKKYH…TRQTHFNNLY (148 aa)) constitute a Helicase C-terminal domain. Residue R753 coordinates ATP. Residues 771–774 (RLRR) are 3' overhang DNA-binding. Residues C807, C826, C834, and C837 each contribute to the Zn(2+) site. The DNA Holliday junction binding stretch occupies residues 865–910 (QVGGINGNRNTGSGRYTLNMMVDIFLGAKSAKIQSGIFGKGAAYSR). 3 3' overhang DNA-binding regions span residues 881-883 (TLN), 892-896 (AKSAK), and 931-937 (YITANDQ). The 81-residue stretch at 983–1063 (EEMVKKCLGE…DKYSEWTTPE (81 aa)) folds into the HRDC domain. The tract at residues 998–1015 (KTLGKIFDVHYFNIFSTS) is necessary for ssDNA and DNA Holliday junction binding. Residues 1068 to 1183 (QSVDTAPGSA…HFLQPSYAVL (116 aa)) are disordered. The span at 1091-1101 (VTSSYFGGNAN) shows a compositional bias: polar residues. The Nuclear localization signal motif lies at 1104–1120 (RKRKRLPNSGESKRKKT). Basic residues predominate over residues 1133–1142 (ARYRRARRAP). Positions 1143–1158 (GSRAAAPAQSSALRGA) are enriched in low complexity.

The protein belongs to the helicase family. RecQ subfamily. Monomer. Homodimer (via N-terminus). Homotetramer (via N-terminus); dimer of dimers. Homohexamer (via N-terminus). Self-association negatively regulates DNA unwinding amplitude and rate. Oligomer complexes dissociate into monomer in presence of ATP. Zn(2+) is required as a cofactor.

Its subcellular location is the nucleus. The enzyme catalyses Couples ATP hydrolysis with the unwinding of duplex DNA by translocating in the 3'-5' direction.. It catalyses the reaction ATP + H2O = ADP + phosphate + H(+). Its function is as follows. ATP-dependent DNA helicase that unwinds single- and double-stranded DNA in a 3'-5' direction. Participates in DNA replication and repair. Involved in 5'-end resection of DNA during double-strand break (DSB) repair. Negatively regulates sister chromatid exchange (SCE). Stimulates DNA 4-way junction branch migration and DNA Holliday junction dissolution. Binds DNA. Binds single-stranded DNA (ssDNA), forked duplex DNA and DNA Holliday junction. In Gallus gallus (Chicken), this protein is RecQ-like DNA helicase BLM (BLM).